The chain runs to 328 residues: MRTFNFLSFPQVHRQALVKAVLVAIATVSLLLTSDVINPQSAQAYPFWAQQTAPETPREATGRIVCANCHLAQKPAEIEIPHSVLPDSVFEAVVKIPYDPASQQVLGDGSKGGLNVGAVLMLPDGFKIAPPDRIPEEMQEKLGGVYFQSYKEGQDNVVIVGPLPGDQYKEIVFPVLAPDPSQNKGIHFGKYAVHLGANRGRGQVYPTGEPSNNNAFKASTAGTISQISKTEAGGYEVTITSEAGPVVENIPAGPELIVSEGQAIEVGQFLTSNPNVGGFGQKDTEVVLQNPGRIKGLVLFLGGIMLCQILLVIKKKQVETVQAAEMNF.

The N-terminal stretch at 1 to 44 (MRTFNFLSFPQVHRQALVKAVLVAIATVSLLLTSDVINPQSAQA) is a signal peptide. Tyr45, Cys66, Cys69, and His70 together coordinate heme. The chain crosses the membrane as a helical span at residues 294–314 (IKGLVLFLGGIMLCQILLVIK).

This sequence belongs to the cytochrome f family. The 4 large subunits of the cytochrome b6-f complex are cytochrome b6, subunit IV (17 kDa polypeptide, PetD), cytochrome f and the Rieske protein, while the 4 small subunits are PetG, PetL, PetM and PetN. The complex functions as a dimer. Heme is required as a cofactor.

Its subcellular location is the cellular thylakoid membrane. Component of the cytochrome b6-f complex, which mediates electron transfer between photosystem II (PSII) and photosystem I (PSI), cyclic electron flow around PSI, and state transitions. This chain is Cytochrome f, found in Microcystis aeruginosa (strain NIES-843 / IAM M-2473).